We begin with the raw amino-acid sequence, 402 residues long: MVPPVYIVSTARTPIGSFQGTLSSLTYSDLGAHAVKAALNKVPQIKPEDVDEIVFGGVLQANVGQAPARQVALKAGLTDKIVASTVNKVCASGLKAIIIGAQNIICGTSDIVVVGGAESMTNTPYYLPTARNGARFGDSTLIDGIQKDGLLDVYEQKLMGVAAEKCAADHGFTREQQDEFAIKSYQKAGNALKQGKFNQEIAPVTIKGVRGKPDVVVEKDEEIEKFNEAKLKSARAVFQKENGTVTGPNASKINDGAAALILVSEAKLKELGLKPLAKINGWGEAARNPIDFTIAPALAVPKAVKHAGLTLDQVDFFELNEAFSVVGLANAEICQIPLEKLNAYGGAVALGHPLGCSGARIVVTLLSVLIQEGGKIGCAGVCNGGGGASSIVIEKVDSDFKL.

Cys-90 serves as the catalytic Acyl-thioester intermediate. The CoA site is built by Tyr-185 and Lys-230. Tyr-185 is a K(+) binding site. Ala-250 provides a ligand contact to K(+). Ser-251 serves as a coordination point for CoA. A K(+)-binding site is contributed by Val-348. Residues His-352 and Cys-382 each act as proton acceptor in the active site.

It belongs to the thiolase-like superfamily. Thiolase family. In terms of assembly, homotetramer.

The protein resides in the cytoplasm. Its subcellular location is the cytosol. The catalysed reaction is 2 acetyl-CoA = acetoacetyl-CoA + CoA. It participates in metabolic intermediate biosynthesis; (R)-mevalonate biosynthesis; (R)-mevalonate from acetyl-CoA: step 1/3. Acetyl-CoA acetyltransferase; part of the first module of ergosterol biosynthesis pathway that includes the early steps of the pathway, conserved across all eukaryotes, and which results in the formation of mevalonate from acetyl-coenzyme A (acetyl-CoA). ERG10 catalyzes the formation of acetoacetyl-CoA from acetyl-CoA. The first module starts with the action of the cytosolic acetyl-CoA acetyltransferase ERG10 that catalyzes the formation of acetoacetyl-CoA. The hydroxymethylglutaryl-CoA synthase ERG13 then condenses acetyl-CoA with acetoacetyl-CoA to form HMG-CoA. The 3-hydroxy-3-methylglutaryl-coenzyme A (HMG-CoA) reductase HMG1 finally reduces HMG-CoA to produce mevalonate. In Candida albicans (strain SC5314 / ATCC MYA-2876) (Yeast), this protein is Acetyl-CoA acetyltransferase.